Consider the following 437-residue polypeptide: Glutamyl-tRNA reductase (437 aa).

Residues 49 to 52 (TCNR), Ser-109, 114 to 116 (EVQ), and Gln-120 contribute to the substrate site. Cys-50 functions as the Nucleophile in the catalytic mechanism. 189-194 (GAGDTA) serves as a coordination point for NADP(+).

This sequence belongs to the glutamyl-tRNA reductase family. In terms of assembly, homodimer.

The enzyme catalyses (S)-4-amino-5-oxopentanoate + tRNA(Glu) + NADP(+) = L-glutamyl-tRNA(Glu) + NADPH + H(+). Its pathway is porphyrin-containing compound metabolism; protoporphyrin-IX biosynthesis; 5-aminolevulinate from L-glutamyl-tRNA(Glu): step 1/2. The protein operates within porphyrin-containing compound metabolism; chlorophyll biosynthesis. In terms of biological role, catalyzes the NADPH-dependent reduction of glutamyl-tRNA(Glu) to glutamate 1-semialdehyde (GSA). This is Glutamyl-tRNA reductase from Chloroherpeton thalassium (strain ATCC 35110 / GB-78).